Consider the following 206-residue polypeptide: Putative 3-methyladenine DNA glycosylase (206 aa).

Belongs to the DNA glycosylase MPG family.

The chain is Putative 3-methyladenine DNA glycosylase from Salinibacter ruber (strain DSM 13855 / M31).